A 547-amino-acid polypeptide reads, in one-letter code: Trigger factor-like protein TIG, Chloroplastic (547 aa).

The N-terminal 77 residues, Met-1–Ala-77, are a transit peptide targeting the chloroplast. At Ala-78 the chain carries N-acetylalanine. The region spanning Gly-271–Asp-366 is the PPIase FKBP-type domain.

It belongs to the FKBP-type PPIase family. Tig subfamily.

The protein localises to the plastid. Its subcellular location is the chloroplast. The catalysed reaction is [protein]-peptidylproline (omega=180) = [protein]-peptidylproline (omega=0). Involved in protein export. Acts as a chaperone by maintaining the newly synthesized protein in an open conformation. Functions as a peptidyl-prolyl cis-trans isomerase. The chain is Trigger factor-like protein TIG, Chloroplastic (TIG) from Arabidopsis thaliana (Mouse-ear cress).